Here is a 692-residue protein sequence, read N- to C-terminus: ATP-dependent RNA helicase MSS116, mitochondrial (692 aa).

Residues methionine 1–lysine 37 constitute a mitochondrion transit peptide. Positions serine 82–lysine 113 are disordered. Residues glutamate 89–lysine 99 show a composition bias toward basic and acidic residues. The short motif at aspartate 130–glutamine 158 is the Q motif element. A Helicase ATP-binding domain is found at valine 162–tyrosine 349. Residue alanine 175–threonine 182 coordinates ATP. Residues aspartate 290 to aspartate 293 carry the DEAD box motif. One can recognise a Helicase C-terminal domain in the interval tyrosine 384–asparagine 534. A disordered region spans residues asparagine 643 to glutamate 692. Residues glycine 661 to serine 670 are compositionally biased toward gly residues.

The protein belongs to the DEAD box helicase family. DDX18/HAS1 subfamily.

It localises to the mitochondrion matrix. It carries out the reaction ATP + H2O = ADP + phosphate + H(+). ATP-dependent RNA helicase required for mitochondrial splicing of group I and II introns. Also required for efficient mitochondrial translation. The chain is ATP-dependent RNA helicase MSS116, mitochondrial (MSS116) from Lodderomyces elongisporus (strain ATCC 11503 / CBS 2605 / JCM 1781 / NBRC 1676 / NRRL YB-4239) (Yeast).